Reading from the N-terminus, the 250-residue chain is Methionine aminopeptidase (250 aa).

Histidine 77 contributes to the substrate binding site. The a divalent metal cation site is built by aspartate 94, aspartate 105, and histidine 169. Histidine 176 is a binding site for substrate. Positions 202 and 235 each coordinate a divalent metal cation.

It belongs to the peptidase M24A family. Methionine aminopeptidase type 1 subfamily. As to quaternary structure, monomer. It depends on Co(2+) as a cofactor. Requires Zn(2+) as cofactor. Mn(2+) serves as cofactor. The cofactor is Fe(2+).

The catalysed reaction is Release of N-terminal amino acids, preferentially methionine, from peptides and arylamides.. Its function is as follows. Removes the N-terminal methionine from nascent proteins. The N-terminal methionine is often cleaved when the second residue in the primary sequence is small and uncharged (Met-Ala-, Cys, Gly, Pro, Ser, Thr, or Val). Requires deformylation of the N(alpha)-formylated initiator methionine before it can be hydrolyzed. The protein is Methionine aminopeptidase of Mycoplasmoides gallisepticum (strain R(low / passage 15 / clone 2)) (Mycoplasma gallisepticum).